A 386-amino-acid chain; its full sequence is Zinc transporter 7-A (386 aa).

The Cytoplasmic portion of the chain corresponds to 1–37 (MLPLSIKDDEYKPPKFNLARKVSGWIRSIFSDSTSRN). The helical transmembrane segment at 38-58 (LFCFLCLNLSFAFVELFYGIW) threads the bilayer. The Lumenal portion of the chain corresponds to 59–67 (SNSLGLISD). A helical membrane pass occupies residues 68 to 88 (SFHMFFDCTALLAGLAASVIS). Topologically, residues 89-102 (RWKTNEAFSYGYVR) are cytoplasmic. Residues 103 to 123 (AEVLAGFVNGLFLIFTAFFIF) traverse the membrane as a helical segment. The Lumenal segment spans residues 124 to 140 (SEGVERALDTPEVHHER). The helical transmembrane segment at 141–161 (LLPVSIMGLLVNIIGIFVFQH) threads the bilayer. The segment at 161-222 (HGGGHGHSHE…GHSHDHSPKH (62 aa)) is his-rich loop. The Cytoplasmic portion of the chain corresponds to 162–246 (GGGHGHSHES…KGSSKQILEG (85 aa)). The segment at 167 to 239 (HSHESGHGHS…DEPPEEHKGS (73 aa)) is disordered. The span at 228-238 (CHDEPPEEHKG) shows a compositional bias: basic and acidic residues. Residues 247 to 267 (VFLHIVADTLGSVGVIFSTIL) form a helical membrane-spanning segment. Topologically, residues 268–272 (MQRYG) are lumenal. Residues 273 to 293 (LMIADPICSMLIALLIFVSVI) form a helical membrane-spanning segment. Residues 294–386 (PLLKQSIGIL…LYVQIDFAAI (93 aa)) lie on the Cytoplasmic side of the membrane.

Belongs to the cation diffusion facilitator (CDF) transporter (TC 2.A.4) family. SLC30A subfamily. As to quaternary structure, homooligomer.

The protein resides in the golgi apparatus membrane. The protein localises to the cytoplasmic vesicle. Its subcellular location is the golgi apparatus. It localises to the trans-Golgi network. It is found in the sarcoplasmic reticulum. The protein resides in the mitochondrion. It carries out the reaction Zn(2+)(in) = Zn(2+)(out). In terms of biological role, zinc ion transporter mediating zinc entry from the cytosol into the lumen of organelles along the secretory pathway. By contributing to zinc ion homeostasis within the early secretory pathway, regulates the activation and folding of enzymes like alkaline phosphatases. This chain is Zinc transporter 7-A (slc30a7-a), found in Xenopus laevis (African clawed frog).